A 551-amino-acid polypeptide reads, in one-letter code: Prunin 1 Pru du 6 (551 aa).

A signal peptide spans 1 to 20 (MAKAFVFSLCLLLVFNGCLA). 2 cysteine pairs are disulfide-bonded: cysteine 32/cysteine 65 and cysteine 108/cysteine 374. The Cupin type-1 1 domain occupies 37-312 (LQAREPDNRI…ALNVNEETAR (276 aa)). Disordered regions lie at residues 111–194 (TFEE…QKTR), 238–293 (NPRK…NVFS), and 329–360 (GNLDFVQPPRGRQEREHEERQQEQLQQERQQQ). Low complexity-rich tracts occupy residues 114–124 (ESQQSSQQGRQ), 132–148 (QQQQQGEQGRQQGQQEQ), and 168–185 (QEQQQGQQGRPQQQQQFR). Residue arginine 194 participates in Ca(2+) binding. Low complexity predominate over residues 254–275 (QQGQSQPRQQGEQGRPGQHQQP). The span at 282–293 (QEQQGNGNNVFS) shows a compositional bias: polar residues. The span at 339–350 (GRQEREHEERQQ) shows a compositional bias: basic and acidic residues. The segment covering 351–360 (EQLQQERQQQ) has biased composition (low complexity). An NGXEET; peptidase recognition motif motif is present at residues 367–372 (NGLEET). Positions 380 to 529 (ENIGNPERAD…AYQISREQAR (150 aa)) constitute a Cupin type-1 2 domain.

The protein belongs to the 11S seed storage protein (globulins) family. In terms of assembly, hexamer of two trimers; each subunit is composed of an acidic and a basic chain derived from a single precursor and linked by a disulfide bond. Post-translationally, proteolytically processed from a single precursor to produce an acidic and a basic chain that are linked by a disulfide bond. As to expression, expressed in seed (at protein level). Expressed in seed.

In terms of biological role, seed storage protein. The protein is Prunin 1 Pru du 6 of Prunus dulcis (Almond).